The chain runs to 219 residues: Apoptosis regulator OPG045 (219 aa).

This sequence belongs to the orthopoxvirus OPG045 family. As to quaternary structure, homodimer. Interacts with host pro-apoptotic protein BCL2L11 (via BH3 domain). Interacts with host NLRP1. Interacts with host BAK.

It is found in the host mitochondrion outer membrane. The protein localises to the host cytoplasm. Its function is as follows. Plays a role in evading host innate immune response by inhibiting host inflammasome activation. Interacts with and inhibits NLR-mediated interleukin-1 beta/IL1B production in infected cells. At the host mitochondria outer membrane, interacts with the BH3 domain of host BAK and prevents BAK from binding active BAX. In turn, host apoptosis is inhibited. This Cynomys gunnisoni (Gunnison's prairie dog) protein is Apoptosis regulator OPG045 (OPG045).